A 337-amino-acid polypeptide reads, in one-letter code: Aspartate carbamoyltransferase catalytic subunit (337 aa).

2 residues coordinate carbamoyl phosphate: Arg57 and Thr58. Residue Lys86 coordinates L-aspartate. Residues Arg107, His135, and Gln138 each contribute to the carbamoyl phosphate site. 2 residues coordinate L-aspartate: Arg172 and Arg234. Residues Leu274 and Pro275 each contribute to the carbamoyl phosphate site.

It belongs to the aspartate/ornithine carbamoyltransferase superfamily. ATCase family. As to quaternary structure, heterododecamer (2C3:3R2) of six catalytic PyrB chains organized as two trimers (C3), and six regulatory PyrI chains organized as three dimers (R2).

The catalysed reaction is carbamoyl phosphate + L-aspartate = N-carbamoyl-L-aspartate + phosphate + H(+). It participates in pyrimidine metabolism; UMP biosynthesis via de novo pathway; (S)-dihydroorotate from bicarbonate: step 2/3. Functionally, catalyzes the condensation of carbamoyl phosphate and aspartate to form carbamoyl aspartate and inorganic phosphate, the committed step in the de novo pyrimidine nucleotide biosynthesis pathway. In Saccharophagus degradans (strain 2-40 / ATCC 43961 / DSM 17024), this protein is Aspartate carbamoyltransferase catalytic subunit.